We begin with the raw amino-acid sequence, 495 residues long: Ectonucleoside triphosphate diphosphohydrolase 2 (495 aa).

Topologically, residues 1–4 (MAGK) are cytoplasmic. Residues 5 to 25 (LVSLVPPLLLAAVGLAGLLLL) traverse the membrane as a helical segment. Topologically, residues 26-462 (CVPTQDVREP…PGLRKGTHFS (437 aa)) are extracellular. Asn64 carries an N-linked (GlcNAc...) asparagine glycan. Residues Cys75 and Cys99 are joined by a disulfide bond. A glycan (N-linked (GlcNAc...) asparagine) is linked at Asn129. Residue Glu165 is the Proton acceptor of the active site. Position 204-208 (204-208 (GASTQ)) interacts with ATP. 2 cysteine pairs are disulfide-bonded: Cys242–Cys284 and Cys265–Cys310. N-linked (GlcNAc...) asparagine glycans are attached at residues Asn294 and Asn319. 2 cysteine pairs are disulfide-bonded: Cys323–Cys328 and Cys377–Cys399. N-linked (GlcNAc...) asparagine glycans are attached at residues Asn378 and Asn443. A helical membrane pass occupies residues 463–483 (SWVALLLLFTVLILAALVLLL). Over 484 to 495 (RQVRSAKSPGAL) the chain is Cytoplasmic.

It belongs to the GDA1/CD39 NTPase family. The cofactor is Ca(2+). Mg(2+) serves as cofactor.

The protein resides in the cell membrane. Functionally, in the nervous system, could hydrolyze ATP and other nucleotides to regulate purinergic neurotransmission. Hydrolyzes ADP only to a marginal extent. The protein is Ectonucleoside triphosphate diphosphohydrolase 2 (Entpd2) of Mus musculus (Mouse).